A 935-amino-acid polypeptide reads, in one-letter code: C-1-tetrahydrofolate synthase, cytoplasmic (935 aa).

The residue at position 1 (Met1) is an N-acetylmethionine. Positions 2–291 (APAGILNGKV…MLMQSTVESA (290 aa)) are methylenetetrahydrofolate dehydrogenase and methenyltetrahydrofolate cyclohydrolase (D/C) domain. Substrate contacts are provided by residues 52–56 (YINVK) and 99–101 (VQL). Lys56 is an active-site residue. NADP(+) is bound by residues 172-174 (GRS) and Ser197. Residue 272–276 (PGGVG) participates in substrate binding. The tract at residues 310–935 (LNLKTPVPSD…PETEQVNGLF (626 aa)) is formyltetrahydrofolate synthetase domain. Position 318 is a phosphoserine (Ser318). 380 to 387 (TPLGEGKS) provides a ligand contact to ATP. Residues Ser413 and Ser490 each carry the phosphoserine modification.

In the N-terminal section; belongs to the tetrahydrofolate dehydrogenase/cyclohydrolase family. The protein in the C-terminal section; belongs to the formate--tetrahydrofolate ligase family. Homodimer.

It localises to the cytoplasm. It carries out the reaction (6R)-5,10-methylene-5,6,7,8-tetrahydrofolate + NADP(+) = (6R)-5,10-methenyltetrahydrofolate + NADPH. The catalysed reaction is (6R)-5,10-methenyltetrahydrofolate + H2O = (6R)-10-formyltetrahydrofolate + H(+). The enzyme catalyses (6S)-5,6,7,8-tetrahydrofolate + formate + ATP = (6R)-10-formyltetrahydrofolate + ADP + phosphate. The protein operates within one-carbon metabolism; tetrahydrofolate interconversion. Its function is as follows. Trifunctional enzyme that catalyzes the interconversion of three forms of one-carbon-substituted tetrahydrofolate: (6R)-5,10-methylene-5,6,7,8-tetrahydrofolate, 5,10-methenyltetrahydrofolate and (6S)-10-formyltetrahydrofolate. These derivatives of tetrahydrofolate are differentially required in nucleotide and amino acid biosynthesis, (6S)-10-formyltetrahydrofolate being required for purine biosynthesis while (6R)-5,10-methylene-5,6,7,8-tetrahydrofolate is used for serine and methionine biosynthesis for instance. The sequence is that of C-1-tetrahydrofolate synthase, cytoplasmic (Mthfd1) from Rattus norvegicus (Rat).